The primary structure comprises 458 residues: Argininosuccinate lyase (458 aa).

The protein belongs to the lyase 1 family. Argininosuccinate lyase subfamily.

The protein resides in the cytoplasm. The catalysed reaction is 2-(N(omega)-L-arginino)succinate = fumarate + L-arginine. Its pathway is amino-acid biosynthesis; L-arginine biosynthesis; L-arginine from L-ornithine and carbamoyl phosphate: step 3/3. This is Argininosuccinate lyase from Neisseria meningitidis serogroup C (strain 053442).